Reading from the N-terminus, the 101-residue chain is Large ribosomal subunit protein uL24 (101 aa).

Belongs to the universal ribosomal protein uL24 family. Part of the 50S ribosomal subunit.

Its function is as follows. One of two assembly initiator proteins, it binds directly to the 5'-end of the 23S rRNA, where it nucleates assembly of the 50S subunit. One of the proteins that surrounds the polypeptide exit tunnel on the outside of the subunit. This Streptococcus pyogenes serotype M1 protein is Large ribosomal subunit protein uL24.